Reading from the N-terminus, the 396-residue chain is Ribosomal RNA large subunit methyltransferase I (396 aa).

Residues 2–79 (AIRIKLKPGR…REEEIDRAFF (78 aa)) enclose the PUA domain.

The protein belongs to the methyltransferase superfamily. RlmI family.

It is found in the cytoplasm. It carries out the reaction cytidine(1962) in 23S rRNA + S-adenosyl-L-methionine = 5-methylcytidine(1962) in 23S rRNA + S-adenosyl-L-homocysteine + H(+). In terms of biological role, specifically methylates the cytosine at position 1962 (m5C1962) of 23S rRNA. This is Ribosomal RNA large subunit methyltransferase I from Shewanella putrefaciens (strain CN-32 / ATCC BAA-453).